A 342-amino-acid polypeptide reads, in one-letter code: Ribosomal RNA small subunit methyltransferase C (342 aa).

Belongs to the methyltransferase superfamily. RsmC family. As to quaternary structure, monomer.

Its subcellular location is the cytoplasm. The catalysed reaction is guanosine(1207) in 16S rRNA + S-adenosyl-L-methionine = N(2)-methylguanosine(1207) in 16S rRNA + S-adenosyl-L-homocysteine + H(+). Functionally, specifically methylates the guanine in position 1207 of 16S rRNA in the 30S particle. The chain is Ribosomal RNA small subunit methyltransferase C from Shewanella sp. (strain MR-4).